The primary structure comprises 248 residues: MIELGVNIDHVATLRQQRHTAYPDPVQAALRAEDAGADLITLHLREDRRHIQDADVYAIRPLLRTRMNLECAVTPEMLEIACAVKPSDVCLVPEKRTELTTEGGLDVAGAQAAVTDAVQLLAEAGIRVSLFIDPDARQIEAAARAGAPVIELHTGAYAEARDDAAVQAELARVRAAVAEGLRHGLRVNAGHGLHYGNVQAVAALDGIAELNIGHAIVAQSIFDGWDKAVRDMKALMVQARLAAVRGHA.

A 3-amino-2-oxopropyl phosphate-binding site is contributed by N7. 9-10 (DH) contacts 1-deoxy-D-xylulose 5-phosphate. A 3-amino-2-oxopropyl phosphate-binding site is contributed by R18. H43 acts as the Proton acceptor in catalysis. 2 residues coordinate 1-deoxy-D-xylulose 5-phosphate: R45 and H50. The active-site Proton acceptor is E70. Residue T100 participates in 1-deoxy-D-xylulose 5-phosphate binding. H191 serves as the catalytic Proton donor. Residues G192 and 213-214 (GH) each bind 3-amino-2-oxopropyl phosphate.

It belongs to the PNP synthase family. In terms of assembly, homooctamer; tetramer of dimers.

The protein resides in the cytoplasm. The enzyme catalyses 3-amino-2-oxopropyl phosphate + 1-deoxy-D-xylulose 5-phosphate = pyridoxine 5'-phosphate + phosphate + 2 H2O + H(+). Its pathway is cofactor biosynthesis; pyridoxine 5'-phosphate biosynthesis; pyridoxine 5'-phosphate from D-erythrose 4-phosphate: step 5/5. Functionally, catalyzes the complicated ring closure reaction between the two acyclic compounds 1-deoxy-D-xylulose-5-phosphate (DXP) and 3-amino-2-oxopropyl phosphate (1-amino-acetone-3-phosphate or AAP) to form pyridoxine 5'-phosphate (PNP) and inorganic phosphate. The chain is Pyridoxine 5'-phosphate synthase from Bordetella bronchiseptica (strain ATCC BAA-588 / NCTC 13252 / RB50) (Alcaligenes bronchisepticus).